Consider the following 300-residue polypeptide: Ribosomal RNA small subunit methyltransferase H (300 aa).

S-adenosyl-L-methionine is bound by residues 46 to 48, Asp-65, Phe-92, Asp-107, and Gln-114; that span reads GGH.

This sequence belongs to the methyltransferase superfamily. RsmH family.

It is found in the cytoplasm. It carries out the reaction cytidine(1402) in 16S rRNA + S-adenosyl-L-methionine = N(4)-methylcytidine(1402) in 16S rRNA + S-adenosyl-L-homocysteine + H(+). Specifically methylates the N4 position of cytidine in position 1402 (C1402) of 16S rRNA. The chain is Ribosomal RNA small subunit methyltransferase H from Prochlorococcus marinus (strain MIT 9515).